The primary structure comprises 361 residues: Phosphoserine aminotransferase (361 aa).

Arg-43 lines the L-glutamate pocket. Pyridoxal 5'-phosphate-binding positions include 77–78, Trp-103, Thr-153, Asp-173, and Gln-196; that span reads AS. Residue Lys-197 is modified to N6-(pyridoxal phosphate)lysine. 238 to 239 serves as a coordination point for pyridoxal 5'-phosphate; the sequence is NT.

It belongs to the class-V pyridoxal-phosphate-dependent aminotransferase family. SerC subfamily. As to quaternary structure, homodimer. Requires pyridoxal 5'-phosphate as cofactor.

The protein resides in the cytoplasm. The catalysed reaction is O-phospho-L-serine + 2-oxoglutarate = 3-phosphooxypyruvate + L-glutamate. It catalyses the reaction 4-(phosphooxy)-L-threonine + 2-oxoglutarate = (R)-3-hydroxy-2-oxo-4-phosphooxybutanoate + L-glutamate. It functions in the pathway amino-acid biosynthesis; L-serine biosynthesis; L-serine from 3-phospho-D-glycerate: step 2/3. The protein operates within cofactor biosynthesis; pyridoxine 5'-phosphate biosynthesis; pyridoxine 5'-phosphate from D-erythrose 4-phosphate: step 3/5. Catalyzes the reversible conversion of 3-phosphohydroxypyruvate to phosphoserine and of 3-hydroxy-2-oxo-4-phosphonooxybutanoate to phosphohydroxythreonine. This Pseudomonas aeruginosa (strain ATCC 15692 / DSM 22644 / CIP 104116 / JCM 14847 / LMG 12228 / 1C / PRS 101 / PAO1) protein is Phosphoserine aminotransferase.